Reading from the N-terminus, the 158-residue chain is Transcription elongation factor GreB (158 aa).

A coiled-coil region spans residues 53 to 75 (KRRLREIDRRVRFLTKRLEVLQI).

The protein belongs to the GreA/GreB family. GreB subfamily.

Its function is as follows. Necessary for efficient RNA polymerase transcription elongation past template-encoded arresting sites. The arresting sites in DNA have the property of trapping a certain fraction of elongating RNA polymerases that pass through, resulting in locked ternary complexes. Cleavage of the nascent transcript by cleavage factors such as GreA or GreB allows the resumption of elongation from the new 3'terminus. GreB releases sequences of up to 9 nucleotides in length. This chain is Transcription elongation factor GreB, found in Pasteurella multocida (strain Pm70).